Here is a 186-residue protein sequence, read N- to C-terminus: Protein GrpE (186 aa).

2 stretches are compositionally biased toward basic and acidic residues: residues 1-13 (MSDN…EEQH) and 23-34 (EETHQAEDAVEH). Residues 1–34 (MSDNKTELNEEQHNATAEGEVSEETHQAEDAVEH) are disordered.

Belongs to the GrpE family. In terms of assembly, homodimer.

The protein resides in the cytoplasm. Functionally, participates actively in the response to hyperosmotic and heat shock by preventing the aggregation of stress-denatured proteins, in association with DnaK and GrpE. It is the nucleotide exchange factor for DnaK and may function as a thermosensor. Unfolded proteins bind initially to DnaJ; upon interaction with the DnaJ-bound protein, DnaK hydrolyzes its bound ATP, resulting in the formation of a stable complex. GrpE releases ADP from DnaK; ATP binding to DnaK triggers the release of the substrate protein, thus completing the reaction cycle. Several rounds of ATP-dependent interactions between DnaJ, DnaK and GrpE are required for fully efficient folding. The polypeptide is Protein GrpE (Hydrogenovibrio crunogenus (strain DSM 25203 / XCL-2) (Thiomicrospira crunogena)).